The sequence spans 541 residues: Zinc finger protein 513 (541 aa).

Residues 1 to 118 form a disordered region; it reads MPRRKQSHPQ…GEARGERPGP (118 aa). Residues 44 to 55 are compositionally biased toward acidic residues; the sequence is LEFEEEEEEDEG. 2 positions are modified to phosphoserine: serine 85 and serine 96. The span at 103-115 shows a compositional bias: basic and acidic residues; that stretch reads EPARGPGEARGER. 8 C2H2-type zinc fingers span residues 150–172, 178–200, 206–228, 360–382, 388–410, 416–438, 444–466, and 472–494; these read YSCR…MQTH, FRCG…TRTH, YRCP…QRTH, FACS…MKTH, FRCA…QRVH, YKCP…GRIH, FRCS…MLRH, and FRCA…QKVH. The interval 492 to 541 is disordered; the sequence is KVHGHGGAGGPGLSAPEGWAPPHSPPSVLSTRGPAALGATGSRALHSDSP.

Belongs to the krueppel C2H2-type zinc-finger protein family. Binds DNA. Can associate with the proximal promoter regions of PAX6 and SP4, and their known targets including ARR3, RHO, OPN1MW2 and OPN1SW. In terms of tissue distribution, widely expressed. In the eye, expression is greatest in the retina and least in the lens and cornea.

Its subcellular location is the nucleus. Its function is as follows. Transcriptional regulator that plays a role in retinal development and maintenance. The chain is Zinc finger protein 513 (Znf513) from Mus musculus (Mouse).